The primary structure comprises 368 residues: Glutamate 5-kinase (368 aa).

Position 9 (Lys-9) interacts with ATP. Residues Ser-49, Asp-136, and Asn-148 each coordinate substrate. Residues 168–169 and 210–216 each bind ATP; these read TD and TGGMMTK. The 79-residue stretch at 275–353 folds into the PUA domain; sequence AGIITIDNGA…ADIENVLGYE (79 aa).

The protein belongs to the glutamate 5-kinase family.

It is found in the cytoplasm. It carries out the reaction L-glutamate + ATP = L-glutamyl 5-phosphate + ADP. It functions in the pathway amino-acid biosynthesis; L-proline biosynthesis; L-glutamate 5-semialdehyde from L-glutamate: step 1/2. Functionally, catalyzes the transfer of a phosphate group to glutamate to form L-glutamate 5-phosphate. The polypeptide is Glutamate 5-kinase (Haemophilus influenzae (strain PittGG)).